The primary structure comprises 323 residues: Cysteine synthase A (323 aa).

Residues N8 and R35 each contribute to the hydrogen sulfide site. At K42 the chain carries N6-(pyridoxal phosphate)lysine. Residues N72 and 177 to 181 each bind pyridoxal 5'-phosphate; that span reads GTGGT. Residue L269 coordinates hydrogen sulfide. S273 contributes to the pyridoxal 5'-phosphate binding site.

The protein belongs to the cysteine synthase/cystathionine beta-synthase family. Homodimer. The cofactor is pyridoxal 5'-phosphate.

It catalyses the reaction O-acetyl-L-serine + hydrogen sulfide = L-cysteine + acetate. It participates in amino-acid biosynthesis; L-cysteine biosynthesis; L-cysteine from L-serine: step 2/2. Functionally, two cysteine synthase enzymes are found. Both catalyze the same reaction. Cysteine synthase B can also use thiosulfate in place of sulfide to give cysteine thiosulfonate as a product. This is Cysteine synthase A (cysK) from Salmonella typhi.